The sequence spans 386 residues: Beta-citrylglutamate synthase B (386 aa).

The ATP-grasp domain maps to 119–304 (FQELAGHGVP…VAGIIADYAA (186 aa)). Residues lysine 158, 193 to 203 (QKYVKESHGRD), and arginine 219 each bind ATP. Mg(2+) is bound by residues aspartate 264, glutamate 277, and asparagine 279. 3 residues coordinate Mn(2+): aspartate 264, glutamate 277, and asparagine 279. A disordered region spans residues 325-359 (ASETSEPELGPPASTAVDNMSASSSSVDSDPESTE). Low complexity predominate over residues 338–352 (STAVDNMSASSSSVD).

It belongs to the RimK family. Requires Mg(2+) as cofactor. Mn(2+) serves as cofactor.

Its subcellular location is the cytoplasm. The enzyme catalyses citrate + L-glutamate + ATP = beta-citrylglutamate + ADP + phosphate + H(+). It carries out the reaction N-acetyl-L-aspartate + L-glutamate + ATP = N-acetyl-L-aspartyl-L-glutamate + ADP + phosphate + H(+). Its function is as follows. Catalyzes the synthesis of beta-citryl-L-glutamate and N-acetyl-L-aspartyl-L-glutamate. Beta-citryl-L-glutamate is synthesized more efficiently than N-acetyl-L-aspartyl-L-glutamate. This chain is Beta-citrylglutamate synthase B (RIMKLB), found in Homo sapiens (Human).